The primary structure comprises 208 residues: Large ribosomal subunit protein uL4 (208 aa).

Belongs to the universal ribosomal protein uL4 family. Part of the 50S ribosomal subunit.

In terms of biological role, one of the primary rRNA binding proteins, this protein initially binds near the 5'-end of the 23S rRNA. It is important during the early stages of 50S assembly. It makes multiple contacts with different domains of the 23S rRNA in the assembled 50S subunit and ribosome. Forms part of the polypeptide exit tunnel. The chain is Large ribosomal subunit protein uL4 from Anaplasma marginale (strain Florida).